Consider the following 598-residue polypeptide: Elongation factor 4 (598 aa).

Residues 5-187 (SHIRNFSIIA…RLVATIPAPT (183 aa)) enclose the tr-type G domain. GTP contacts are provided by residues 17–22 (DHGKST) and 134–137 (NKMD).

Belongs to the TRAFAC class translation factor GTPase superfamily. Classic translation factor GTPase family. LepA subfamily.

The protein resides in the cell inner membrane. The catalysed reaction is GTP + H2O = GDP + phosphate + H(+). Its function is as follows. Required for accurate and efficient protein synthesis under certain stress conditions. May act as a fidelity factor of the translation reaction, by catalyzing a one-codon backward translocation of tRNAs on improperly translocated ribosomes. Back-translocation proceeds from a post-translocation (POST) complex to a pre-translocation (PRE) complex, thus giving elongation factor G a second chance to translocate the tRNAs correctly. Binds to ribosomes in a GTP-dependent manner. The protein is Elongation factor 4 of Pseudomonas syringae pv. syringae (strain B728a).